A 386-amino-acid chain; its full sequence is L-olivosyl-oleandolide 3-O-methyltransferase (386 aa).

S-adenosyl-L-methionine-binding positions include serine 166, 195-201 (EIGIGGY), serine 210, aspartate 227, 245-246 (RQ), and aspartate 268. Aspartate 268 lines the Mg(2+) pocket. Histidine 271 acts as the Proton acceptor in catalysis. Residues glutamate 296 and aspartate 297 each coordinate Mg(2+). The disordered stretch occupies residues 364-386 (RRAINKEGGIPHTVPREPFWNDN).

This sequence belongs to the methyltransferase OleY/MycE family. As to quaternary structure, homodimer. It depends on Mg(2+) as a cofactor.

The catalysed reaction is L-olivosyl-oleandolide + S-adenosyl-L-methionine = L-oleandrosyl-oleandolide + S-adenosyl-L-homocysteine + H(+). The protein operates within antibiotic biosynthesis. 3-O-methyltransferase involved in the synthesis of L-oleandrose, a sugar attached to oleandomycin, a macrolide antibiotic. Acts on monoglycosylated macrolactones and mediates the conversion of L-olivosyl-erythronolide B into its 3-O-methylated derivative, L-oleandrosyl-erythronolide B. Also able to methylate other monoglycosylated derivatives, such as L-rhamnosyl- and L-mycarosyl-erythronolide B. This is L-olivosyl-oleandolide 3-O-methyltransferase (oleY) from Streptomyces antibioticus.